A 482-amino-acid polypeptide reads, in one-letter code: Glycogen synthase (482 aa).

Lys18 contacts ADP-alpha-D-glucose.

It belongs to the glycosyltransferase 1 family. Bacterial/plant glycogen synthase subfamily.

It catalyses the reaction [(1-&gt;4)-alpha-D-glucosyl](n) + ADP-alpha-D-glucose = [(1-&gt;4)-alpha-D-glucosyl](n+1) + ADP + H(+). It participates in glycan biosynthesis; glycogen biosynthesis. Synthesizes alpha-1,4-glucan chains using ADP-glucose. This Rhodopseudomonas palustris (strain HaA2) protein is Glycogen synthase.